A 96-amino-acid chain; its full sequence is U6 snRNA-associated Sm-like protein LSm8 (96 aa).

Residues 1-76 form the Sm domain; it reads MTSALENYIN…VAVIGEIDEE (76 aa). Threonine 2 is subject to N-acetylthreonine.

Belongs to the snRNP Sm proteins family. As to quaternary structure, component of the precatalytic spliceosome (spliceosome B complex). Component of the U4/U6-U5 tri-snRNP complex, a building block of the precatalytic spliceosome (spliceosome B complex). The U4/U6-U5 tri-snRNP complex is composed of the U4, U6 and U5 snRNAs and at least PRPF3, PRPF4, PRPF6, PRPF8, PRPF31, SNRNP200, TXNL4A, SNRNP40, SNRPB, SNRPD1, SNRPD2, SNRPD3, SNRPE, SNRPF, SNRPG, DDX23, CD2BP2, PPIH, SNU13, EFTUD2, SART1 and USP39, plus LSM2, LSM3, LSM4, LSM5, LSM6, LSM7 and LSM8. LSM2, LSM3, LSM4, LSM5, LSM6, LSM7 and LSM8 form a heptameric, ring-shaped subcomplex (the LSM2-8 complex) that is part of the U4/U6-U5 tri-snRNP complex and the precatalytic spliceosome.

The protein resides in the nucleus. Functionally, plays a role in pre-mRNA splicing as component of the U4/U6-U5 tri-snRNP complex that is involved in spliceosome assembly, and as component of the precatalytic spliceosome (spliceosome B complex). The heptameric LSM2-8 complex binds specifically to the 3'-terminal U-tract of U6 snRNA. In Bos taurus (Bovine), this protein is U6 snRNA-associated Sm-like protein LSm8 (LSM8).